The sequence spans 254 residues: Diphthine synthase (254 aa).

S-adenosyl-L-methionine is bound by residues Asp-83, Leu-86, 111–112 (SI), Leu-163, and Val-205.

Belongs to the diphthine synthase family. As to quaternary structure, homodimer.

The catalysed reaction is 2-[(3S)-amino-3-carboxypropyl]-L-histidyl-[translation elongation factor 2] + 3 S-adenosyl-L-methionine = diphthine-[translation elongation factor 2] + 3 S-adenosyl-L-homocysteine + 3 H(+). The protein operates within protein modification; peptidyl-diphthamide biosynthesis. S-adenosyl-L-methionine-dependent methyltransferase that catalyzes the trimethylation of the amino group of the modified target histidine residue in translation elongation factor 2 (EF-2), to form an intermediate called diphthine. The three successive methylation reactions represent the second step of diphthamide biosynthesis. This Pyrobaculum aerophilum (strain ATCC 51768 / DSM 7523 / JCM 9630 / CIP 104966 / NBRC 100827 / IM2) protein is Diphthine synthase.